Consider the following 120-residue polypeptide: Small ribosomal subunit protein bS6 (120 aa).

It belongs to the bacterial ribosomal protein bS6 family.

In terms of biological role, binds together with bS18 to 16S ribosomal RNA. This is Small ribosomal subunit protein bS6 from Blochmanniella floridana.